The sequence spans 186 residues: Nuclear transcription factor Y subunit C-5 (186 aa).

Positions 166–186 (QMPGAWTEEDATGANGGNGGN) are disordered.

This sequence belongs to the NFYC/HAP5 subunit family. As to quaternary structure, heterotrimeric transcription factor composed of three components, NF-YA, NF-YB and NF-YC. NF-YB and NF-YC must interact and dimerize for NF-YA association and DNA binding. As to expression, expressed in inflorescences and flowers.

It localises to the nucleus. Its function is as follows. Stimulates the transcription of various genes by recognizing and binding to a CCAAT motif in promoters. The protein is Nuclear transcription factor Y subunit C-5 (NFYC5) of Arabidopsis thaliana (Mouse-ear cress).